Consider the following 790-residue polypeptide: Tumor necrosis factor alpha-induced protein 3 (790 aa).

Alanine 2 carries the N-acetylalanine modification. A TRAF-binding region spans residues 58-300; sequence PQFREIIHKA…LTDPENEMKE (243 aa). The region spanning 92–263 is the OTU domain; the sequence is LVALKTNGDG…SHHFVPLVTL (172 aa). Aspartate 100 is an active-site residue. Cysteine 103 acts as the Nucleophile in catalysis. Interaction with ubiquitin regions lie at residues 157–159, 190–192, and 224–227; these read LCY, SLE, and FAPL. Histidine 256 serves as the catalytic Proton acceptor. Positions 369 to 775 are interaction with TNIP1; the sequence is AQNPMESSLP…ACDHFGNAKC (407 aa). The A20-type 1 zinc finger occupies 381 to 416; it reads SLMDVKCETPNCPFFMSVNTQPLCHECSERRQKNQN. An interaction with RIPK1 region spans residues 386 to 453; that stretch reads KCETPNCPFF…EPLAWNPEEP (68 aa). 4 residues coordinate Zn(2+): cysteine 387, cysteine 392, cysteine 404, and cysteine 407. A disordered region spans residues 415-467; it reads QNKLPKLNSKPGPEGLPGMALGASRGEAYEPLAWNPEEPTGGPHSAPPTAPSP. Residue serine 459 is modified to Phosphoserine. 2 A20-type zinc fingers span residues 472 to 507 and 515 to 548; these read ETTAMKCRSPGCPFTLNVQHNGFCERCHNARQLHAS and HLDPGKCQACLQDVTRTFNGICSTCFKRTTAEAS. The Zn(2+) site is built by cysteine 478, cysteine 483, cysteine 495, cysteine 498, cysteine 521, cysteine 524, cysteine 536, and cysteine 539. The disordered stretch occupies residues 550–580; the sequence is SLSTSLPPSCHQRSKSDPSQLVRSPSPHSCH. Residues 566-576 are compositionally biased toward polar residues; that stretch reads DPSQLVRSPSP. Serine 575 carries the phosphoserine modification. Residues 601–636 form an A20-type 4 zinc finger; sequence RTGTSKCRKAGCMYFGTPENKGFCTLCFIEYRENKH. Residues 605–655 are required for proteasomal degradation of UBE2N and UBE2D3, TRAF6 deubiquitination, and TAX1BP1 interaction with UBE2N; that stretch reads SKCRKAGCMYFGTPENKGFCTLCFIEYRENKHLVAASGKASPTASRFQNTI. The interval 606–790 is sufficient for inhibitory activity of TNF-induced NF-kappa-B activity; sequence KCRKAGCMYF…ECFQFKQMYG (185 aa). 4 residues coordinate Zn(2+): cysteine 607, cysteine 612, cysteine 624, and cysteine 627. Serine 645 carries the phosphoserine modification. The segment at 651–686 adopts an A20-type 5 zinc-finger fold; the sequence is FQNTIPCLGRECGTLGSTMFEGYCQKCFIEAQNQRF. 4 residues coordinate Zn(2+): cysteine 657, cysteine 662, cysteine 674, and cysteine 677. Basic and acidic residues predominate over residues 689–705; sequence AKRTEEQLRSSQRRDVP. A disordered region spans residues 689–712; sequence AKRTEEQLRSSQRRDVPRTTQSTS. The interval 697–790 is required for lysosomal localization and for TRAF2 lysosomal degradation; sequence RSSQRRDVPR…ECFQFKQMYG (94 aa). 2 A20-type zinc fingers span residues 710–745 and 756–790; these read STSRPKCARASCKNILACRSEELCMECQHPNPRMGP and DPPKQRCWAPACDHFGNAKCNGYCNECFQFKQMYG. Cysteine 716, cysteine 721, cysteine 733, cysteine 736, cysteine 762, cysteine 767, cysteine 779, and cysteine 782 together coordinate Zn(2+).

The protein belongs to the peptidase C64 family. In terms of assembly, homodimer. Interacts with TNIP1, TAX1BP1 and TRAF2. Interacts with RNF11, ITCH and TAX1BP1 only after TNF stimulation; these interaction are transient and they are lost after 1 hour of stimulation with TNF. Interacts with YWHAZ and YWHAH. Interacts with IKBKG; the interaction is induced by TNF stimulation and by polyubiquitin. Interacts with RIPK1. Interacts with UBE2N; the interaction requires TAX1BP1. Interacts with TRAF6. Post-translationally, proteolytically cleaved by MALT1 upon TCR stimulation; disrupts NF-kappa-B inhibitory function and results in increased IL-2 production. It is proposed that only a fraction of TNFAIP3 colocalized with TCR and CBM complex is cleaved, leaving the main TNFAIP3 pool intact.

The protein localises to the cytoplasm. Its subcellular location is the nucleus. It localises to the lysosome. It catalyses the reaction Thiol-dependent hydrolysis of ester, thioester, amide, peptide and isopeptide bonds formed by the C-terminal Gly of ubiquitin (a 76-residue protein attached to proteins as an intracellular targeting signal).. Functionally, ubiquitin-editing enzyme that contains both ubiquitin ligase and deubiquitinase activities. Involved in immune and inflammatory responses signaled by cytokines, such as TNF-alpha and IL-1 beta, or pathogens via Toll-like receptors (TLRs) through terminating NF-kappa-B activity. Essential component of a ubiquitin-editing protein complex, comprising also RNF11, ITCH and TAX1BP1, that ensures the transient nature of inflammatory signaling pathways. In cooperation with TAX1BP1 promotes disassembly of E2-E3 ubiquitin protein ligase complexes in IL-1R and TNFR-1 pathways; affected are at least E3 ligases TRAF6, TRAF2 and BIRC2, and E2 ubiquitin-conjugating enzymes UBE2N and UBE2D3. In cooperation with TAX1BP1 promotes ubiquitination of UBE2N and proteasomal degradation of UBE2N and UBE2D3. Upon TNF stimulation, deubiquitinates 'Lys-63'-polyubiquitin chains on RIPK1 and catalyzes the formation of 'Lys-48'-polyubiquitin chains. This leads to RIPK1 proteasomal degradation and consequently termination of the TNF- or LPS-mediated activation of NF-kappa-B. Deubiquitinates TRAF6 probably acting on 'Lys-63'-linked polyubiquitin. Upon T-cell receptor (TCR)-mediated T-cell activation, deubiquitinates 'Lys-63'-polyubiquitin chains on MALT1 thereby mediating disassociation of the CBM (CARD11:BCL10:MALT1) and IKK complexes and preventing sustained IKK activation. Deubiquitinates NEMO/IKBKG; the function is facilitated by TNIP1 and leads to inhibition of NF-kappa-B activation. Upon stimulation by bacterial peptidoglycans, probably deubiquitinates RIPK2. Can also inhibit I-kappa-B-kinase (IKK) through a non-catalytic mechanism which involves polyubiquitin; polyubiquitin promotes association with IKBKG and prevents IKK MAP3K7-mediated phosphorylation. Targets TRAF2 for lysosomal degradation. In vitro able to deubiquitinate 'Lys-11'-, 'Lys-48'- and 'Lys-63' polyubiquitin chains. Inhibitor of programmed cell death. Has a role in the function of the lymphoid system. Required for LPS-induced production of pro-inflammatory cytokines and IFN beta in LPS-tolerized macrophages. This chain is Tumor necrosis factor alpha-induced protein 3 (TNFAIP3), found in Macaca fascicularis (Crab-eating macaque).